The following is a 132-amino-acid chain: uncharacterized protein (132 aa).

The protein to M.jannaschii MJ0661.

This is an uncharacterized protein from Helicobacter pylori (strain J99 / ATCC 700824) (Campylobacter pylori J99).